Reading from the N-terminus, the 1720-residue chain is DNA-directed RNA polymerase I subunit RPA1 (1720 aa).

Residues C64, C67, C74, H77, C104, and C107 each coordinate Zn(2+). The segment at 110–201 (LTCPRAVIHL…IALFWKAHMN (92 aa)) is clamp. Positions 205 and 208 each coordinate Zn(2+). S240 is modified (phosphoserine). The interval 320-426 (FTNGQTVNLQ…IRQILEKKEG (107 aa)) is clamp. The tract at residues 403–416 (DSEMDKLMMDKYPG) is rudder. DNA-binding residues include K424, R429, and R436. The involved in RRN3 binding to Pol I complex stretch occupies residues 468–542 (YPQPVTPWNV…QGTKIVCRHV (75 aa)). RNA is bound at residue R552. Mg(2+)-binding residues include D588, D590, and D592. RNA is bound at residue D592. Residues 805-883 (KPKADVKRQR…NEINKACMPF (79 aa)) form a funnel region. A bridging helix region spans residues 960–1001 (KPPEFFFHCMAGREGLVDTAVKTSRSGYLQRCIIKHLEGLVV). The tract at residues 1060–1155 (ADPKKALHHF…SLSVWRPDIY (96 aa)) is mediates the interaction with TOP2A. The trigger loop stretch occupies residues 1207-1248 (PGEAVGLLAAQSIGEPSTQMTLNTFHFAGRGEMNVTLGIPRL). DNA is bound at residue R1249. The disordered stretch occupies residues 1365 to 1498 (RNVNTRRATQ…SQEPQGPEAM (134 aa)). Positions 1373–1390 (TQRDLDNAGELGRSRGEQ) are enriched in basic and acidic residues. A Phosphoserine modification is found at S1386. Composition is skewed to acidic residues over residues 1391-1412 (EGDE…DADA) and 1422-1446 (EEEV…EDMQ). Over residues 1447–1461 (EERNPHREGARKTQE) the composition is skewed to basic and acidic residues. Positions 1462–1474 (QDEEVGLGTEEDP) are enriched in acidic residues.

Belongs to the RNA polymerase beta' chain family. As to quaternary structure, component of the RNA polymerase I (Pol I) complex consisting of 13 subunits: a ten-subunit catalytic core composed of POLR1A/RPA1, POLR1B/RPA2, POLR1C/RPAC1, POLR1D/RPAC2, POLR1H/RPA12, POLR2E/RPABC1, POLR2F/RPABC2, POLR2H/RPABC3, POLR2K/RPABC4 and POLR2L/RPABC5; a mobile stalk subunit POLR1F/RPA43 protruding from the core and additional subunits homologous to general transcription factors POLR1E/RPA49 and POLR1G/RPA34. Part of Pol I pre-initiation complex (PIC), in which Pol I core assembles with RRN3 and promoter-bound UTBF and SL1/TIF-IB complex. Interacts (via dock II domain) with TOP2A; this interaction may assist Pol I transcription initiation by releasing supercoils occurring during DNA unwinding. Interacts with CAVIN1; this interaction induces the dissociation of Pol I complex paused at rDNA terminator sequences. Interacts with MYO1C. Interacts with ERBB2. Interacts with DDX11. Interacts with RECQL5. It depends on Mg(2+) as a cofactor.

Its subcellular location is the nucleus. The protein resides in the nucleolus. The protein localises to the chromosome. It carries out the reaction RNA(n) + a ribonucleoside 5'-triphosphate = RNA(n+1) + diphosphate. Its function is as follows. Catalytic core component of RNA polymerase I (Pol I), a DNA-dependent RNA polymerase which synthesizes ribosomal RNA precursors using the four ribonucleoside triphosphates as substrates. Transcribes 47S pre-rRNAs from multicopy rRNA gene clusters, giving rise to 5.8S, 18S and 28S ribosomal RNAs. Pol I-mediated transcription cycle proceeds through transcription initiation, transcription elongation and transcription termination stages. During transcription initiation, Pol I pre-initiation complex (PIC) is recruited by the selectivity factor 1 (SL1/TIF-IB) complex bound to the core promoter that precedes an rDNA repeat unit. The PIC assembly bends the promoter favoring the formation of the transcription bubble and promoter escape. Once the polymerase has escaped from the promoter it enters the elongation phase during which RNA is actively polymerized, based on complementarity with the template DNA strand. Highly processive, assembles in structures referred to as 'Miller trees' where many elongating Pol I complexes queue and transcribe the same rDNA coding regions. At terminator sequences downstream of the rDNA gene, PTRF interacts with Pol I and halts Pol I transcription leading to the release of the RNA transcript and polymerase from the DNA. Forms Pol I active center together with the second largest subunit POLR1B/RPA2. Appends one nucleotide at a time to the 3' end of the nascent RNA, with POLR1A/RPA1 contributing a Mg(2+)-coordinating DxDGD motif, and POLR1B/RPA2 participating in the coordination of a second Mg(2+) ion and providing lysine residues believed to facilitate Watson-Crick base pairing between the incoming nucleotide and the template base. Typically, Mg(2+) ions direct a 5' nucleoside triphosphate to form a phosphodiester bond with the 3' hydroxyl of the preceding nucleotide of the nascent RNA, with the elimination of pyrophosphate. Has proofreading activity: Pauses and backtracks to allow the cleavage of a missincorporated nucleotide via POLR1H/RPA12. High Pol I processivity is associated with decreased transcription fidelity. The polypeptide is DNA-directed RNA polymerase I subunit RPA1 (Homo sapiens (Human)).